The primary structure comprises 164 residues: Phosphopantetheine adenylyltransferase (164 aa).

S9 serves as a coordination point for substrate. ATP contacts are provided by residues 9–10 and H17; that span reads SF. The substrate site is built by K41, L73, and R87. ATP-binding positions include 88-90, E98, and 123-129; these read GLR and YTFLSSS.

It belongs to the bacterial CoaD family. In terms of assembly, homohexamer. The cofactor is Mg(2+).

Its subcellular location is the cytoplasm. It carries out the reaction (R)-4'-phosphopantetheine + ATP + H(+) = 3'-dephospho-CoA + diphosphate. Its pathway is cofactor biosynthesis; coenzyme A biosynthesis; CoA from (R)-pantothenate: step 4/5. Functionally, reversibly transfers an adenylyl group from ATP to 4'-phosphopantetheine, yielding dephospho-CoA (dPCoA) and pyrophosphate. The chain is Phosphopantetheine adenylyltransferase from Dictyoglomus thermophilum (strain ATCC 35947 / DSM 3960 / H-6-12).